A 284-amino-acid chain; its full sequence is Bifunctional protein FolD (284 aa).

Residues 165–167, T192, and V233 each bind NADP(+); that span reads GRG.

The protein belongs to the tetrahydrofolate dehydrogenase/cyclohydrolase family. Homodimer.

The catalysed reaction is (6R)-5,10-methylene-5,6,7,8-tetrahydrofolate + NADP(+) = (6R)-5,10-methenyltetrahydrofolate + NADPH. It carries out the reaction (6R)-5,10-methenyltetrahydrofolate + H2O = (6R)-10-formyltetrahydrofolate + H(+). Its pathway is one-carbon metabolism; tetrahydrofolate interconversion. Catalyzes the oxidation of 5,10-methylenetetrahydrofolate to 5,10-methenyltetrahydrofolate and then the hydrolysis of 5,10-methenyltetrahydrofolate to 10-formyltetrahydrofolate. In Corynebacterium efficiens (strain DSM 44549 / YS-314 / AJ 12310 / JCM 11189 / NBRC 100395), this protein is Bifunctional protein FolD.